A 206-amino-acid polypeptide reads, in one-letter code: ATP phosphoribosyltransferase (206 aa).

The protein belongs to the ATP phosphoribosyltransferase family. Short subfamily. In terms of assembly, heteromultimer composed of HisG and HisZ subunits.

It is found in the cytoplasm. The enzyme catalyses 1-(5-phospho-beta-D-ribosyl)-ATP + diphosphate = 5-phospho-alpha-D-ribose 1-diphosphate + ATP. It participates in amino-acid biosynthesis; L-histidine biosynthesis; L-histidine from 5-phospho-alpha-D-ribose 1-diphosphate: step 1/9. Functionally, catalyzes the condensation of ATP and 5-phosphoribose 1-diphosphate to form N'-(5'-phosphoribosyl)-ATP (PR-ATP). Has a crucial role in the pathway because the rate of histidine biosynthesis seems to be controlled primarily by regulation of HisG enzymatic activity. The sequence is that of ATP phosphoribosyltransferase from Leptospira interrogans serogroup Icterohaemorrhagiae serovar copenhageni (strain Fiocruz L1-130).